We begin with the raw amino-acid sequence, 91 residues long: Acylphosphatase (91 aa).

Residues 3 to 91 form the Acylphosphatase-like domain; sequence CLKAVVKGKV…GNYGDFHIKY (89 aa). Residues arginine 18 and asparagine 36 contribute to the active site.

This sequence belongs to the acylphosphatase family.

It catalyses the reaction an acyl phosphate + H2O = a carboxylate + phosphate + H(+). The polypeptide is Acylphosphatase (acyP) (Dehalococcoides mccartyi (strain ATCC BAA-2266 / KCTC 15142 / 195) (Dehalococcoides ethenogenes (strain 195))).